We begin with the raw amino-acid sequence, 132 residues long: Fatty acid-binding protein, intestinal (132 aa).

N-acetylalanine is present on Ala-2. Residues Trp-83 and Arg-107 each coordinate hexadecanoate. Residues Trp-83 and Arg-107 each coordinate tetradecanoate.

This sequence belongs to the calycin superfamily. Fatty-acid binding protein (FABP) family.

It localises to the cytoplasm. Functionally, FABPs are thought to play a role in the intracellular transport of long-chain fatty acids and their acyl-CoA esters. FABP2 is probably involved in triglyceride-rich lipoprotein synthesis. Binds saturated long-chain fatty acids with a high affinity, but binds with a lower affinity to unsaturated long-chain fatty acids. FABP2 may also help maintain energy homeostasis by functioning as a lipid sensor. The sequence is that of Fatty acid-binding protein, intestinal (FABP2) from Bos taurus (Bovine).